A 253-amino-acid chain; its full sequence is LexA repressor (253 aa).

The H-T-H motif DNA-binding region spans 26-46 (FDEMKDALNLRSKSGIHRLIS). A disordered region spans residues 73-97 (MPAATGKPPLAESGPPPVTAPATDE). Active-site for autocatalytic cleavage activity residues include Ser-174 and Lys-212.

The protein belongs to the peptidase S24 family. Homodimer.

The catalysed reaction is Hydrolysis of Ala-|-Gly bond in repressor LexA.. In terms of biological role, represses a number of genes involved in the response to DNA damage (SOS response), including recA and lexA. In the presence of single-stranded DNA, RecA interacts with LexA causing an autocatalytic cleavage which disrupts the DNA-binding part of LexA, leading to derepression of the SOS regulon and eventually DNA repair. The protein is LexA repressor of Gluconacetobacter diazotrophicus (strain ATCC 49037 / DSM 5601 / CCUG 37298 / CIP 103539 / LMG 7603 / PAl5).